The following is a 370-amino-acid chain: Protein FAM110B (370 aa).

Disordered stretches follow at residues 127–151 (SSEG…RSEA) and 237–256 (KSPE…RPSL). 2 positions are modified to phosphoserine: S238 and S301. Positions 317–337 (DCEQSQDSNSDLRNDDSANDR) are disordered. A compositionally biased stretch (basic and acidic residues) spans 326 to 335 (SDLRNDDSAN).

This sequence belongs to the FAM110 family.

The protein resides in the cytoplasm. It is found in the cytoskeleton. Its subcellular location is the microtubule organizing center. It localises to the centrosome. The polypeptide is Protein FAM110B (FAM110B) (Pongo abelii (Sumatran orangutan)).